The sequence spans 310 residues: tRNA dimethylallyltransferase (310 aa).

5–12 (GPTASGKS) lines the ATP pocket. Substrate is bound at residue 7–12 (TASGKS). The interval 30 to 33 (DSMQ) is interaction with substrate tRNA.

The protein belongs to the IPP transferase family. As to quaternary structure, monomer. Mg(2+) is required as a cofactor.

It carries out the reaction adenosine(37) in tRNA + dimethylallyl diphosphate = N(6)-dimethylallyladenosine(37) in tRNA + diphosphate. Functionally, catalyzes the transfer of a dimethylallyl group onto the adenine at position 37 in tRNAs that read codons beginning with uridine, leading to the formation of N6-(dimethylallyl)adenosine (i(6)A). The sequence is that of tRNA dimethylallyltransferase from Rhodopseudomonas palustris (strain HaA2).